Here is a 398-residue protein sequence, read N- to C-terminus: Serpin-Z2A (398 aa).

The interval 343–367 is RCL; the sequence is GTEAAAATIAKAVLLSASPPSDMDF.

This sequence belongs to the serpin family.

Functionally, inhibits chymotrypsin and cathepsin G in vitro. The protein is Serpin-Z2A of Triticum aestivum (Wheat).